The primary structure comprises 67 residues: Cold shock protein (67 aa).

The CSD domain occupies 4-64 (GTVKWFNAEK…GAKGPQATGV (61 aa)).

The protein localises to the cytoplasm. The sequence is that of Cold shock protein (csp) from Arthrobacter globiformis.